A 315-amino-acid polypeptide reads, in one-letter code: Olfactory receptor 10H5 (315 aa).

At M1–L25 the chain is on the extracellular side. N-linked (GlcNAc...) asparagine glycosylation occurs at N5. Residues M26–M46 form a helical membrane-spanning segment. Residues A47 to S54 lie on the Cytoplasmic side of the membrane. A helical membrane pass occupies residues L55–V75. At A76–S99 the chain is on the extracellular side. C97 and C189 are disulfide-bonded. A helical transmembrane segment spans residues Q100–Y120. Topologically, residues D121 to R139 are cytoplasmic. The chain crosses the membrane as a helical span at residues G140 to T160. At S161–A197 the chain is on the extracellular side. A helical membrane pass occupies residues K198–S218. Residues Y219–A238 are Cytoplasmic-facing. The chain crosses the membrane as a helical span at residues F239–I259. Over Y260 to D272 the chain is Extracellular. The helical transmembrane segment at T273–L293 threads the bilayer. Topologically, residues R294–C315 are cytoplasmic.

The protein belongs to the G-protein coupled receptor 1 family.

It localises to the cell membrane. Functionally, odorant receptor. This chain is Olfactory receptor 10H5 (OR10H5), found in Homo sapiens (Human).